The chain runs to 330 residues: Probable xanthine dehydrogenase subunit A (330 aa).

In terms of assembly, could be composed of four subunits: PucA, PucC, PucD and PucE.

The catalysed reaction is xanthine + NAD(+) + H2O = urate + NADH + H(+). It carries out the reaction hypoxanthine + NAD(+) + H2O = xanthine + NADH + H(+). Its pathway is purine metabolism; hypoxanthine degradation; urate from hypoxanthine: step 1/2. It participates in purine metabolism; hypoxanthine degradation; urate from hypoxanthine: step 2/2. Its function is as follows. Oxidizes hypoxanthine and xanthine to uric acid. PucA subunit could exert a molybdenum cofactor recruiting function. In Bacillus subtilis (strain 168), this protein is Probable xanthine dehydrogenase subunit A (pucA).